The primary structure comprises 165 residues: Cysteine-rich hydrophobic domain-containing protein 2 (165 aa).

Residues 1–26 (MADFDEIYEEEEDEERALEEQLLKYS) adopt a coiled-coil conformation. The CHIC motif (Cys-rich) motif lies at 88–106 (CGCLCCCCTLGCSMWPVIC).

Belongs to the CHIC family. Post-translationally, palmitoylation in the CHIC motif is required for membrane association.

The protein resides in the membrane. It is found in the golgi apparatus. The sequence is that of Cysteine-rich hydrophobic domain-containing protein 2 (Chic2) from Mus musculus (Mouse).